Consider the following 156-residue polypeptide: Protein-export protein SecB (156 aa).

It belongs to the SecB family. Homotetramer, a dimer of dimers. One homotetramer interacts with 1 SecA dimer.

Its subcellular location is the cytoplasm. Functionally, one of the proteins required for the normal export of preproteins out of the cell cytoplasm. It is a molecular chaperone that binds to a subset of precursor proteins, maintaining them in a translocation-competent state. It also specifically binds to its receptor SecA. The sequence is that of Protein-export protein SecB from Aeromonas hydrophila subsp. hydrophila (strain ATCC 7966 / DSM 30187 / BCRC 13018 / CCUG 14551 / JCM 1027 / KCTC 2358 / NCIMB 9240 / NCTC 8049).